The primary structure comprises 374 residues: Glyceraldehyde-3-phosphate dehydrogenase A, chloroplastic (374 aa).

A chloroplast-targeting transit peptide spans 1–34; the sequence is MAAMMQKSAFTGSAVSSKSGVRAKAARAVVDVRA. Residues 47 to 48, Asp71, and Arg116 contribute to the NADP(+) site; that span reads RI. Cys55 and Cys325 are oxidised to a cystine. D-glyceraldehyde 3-phosphate-binding positions include 189-191, Thr220, Arg235, 248-249, and Arg271; these read SCT and TG. Cys190 functions as the Nucleophile in the catalytic mechanism. An NADP(+)-binding site is contributed by Asn353.

The protein belongs to the glyceraldehyde-3-phosphate dehydrogenase family. In terms of assembly, homotetramer. Component of a complex that contains two dimers of PRK, two tetramers of GAPDH and CP12. CP12 associates with GAPDH, causing its conformation to change. This GAPDH/CP12 complex binds PRK to form a half-complex (one unit). This unit probably dimerizes due partially to interactions between the enzymes of each unit.

Its subcellular location is the plastid. The protein resides in the chloroplast. It carries out the reaction D-glyceraldehyde 3-phosphate + phosphate + NADP(+) = (2R)-3-phospho-glyceroyl phosphate + NADPH + H(+). It participates in carbohydrate biosynthesis; Calvin cycle. The polypeptide is Glyceraldehyde-3-phosphate dehydrogenase A, chloroplastic (GAPA) (Chlamydomonas reinhardtii (Chlamydomonas smithii)).